A 137-amino-acid chain; its full sequence is Sec-independent protein translocase protein TatB (137 aa).

Residues 2 to 22 (FANIGWGEMLILVIAGLVILG) form a helical membrane-spanning segment. The tract at residues 92 to 137 (FFTGKFDQQNGKPAAGQEKPVTPVNPPVTATPPSESTATPFDSDAT) is disordered. The segment covering 122–131 (TPPSESTATP) has biased composition (low complexity).

It belongs to the TatB family. In terms of assembly, the Tat system comprises two distinct complexes: a TatABC complex, containing multiple copies of TatA, TatB and TatC subunits, and a separate TatA complex, containing only TatA subunits. Substrates initially bind to the TatABC complex, which probably triggers association of the separate TatA complex to form the active translocon.

It is found in the cell membrane. Its function is as follows. Part of the twin-arginine translocation (Tat) system that transports large folded proteins containing a characteristic twin-arginine motif in their signal peptide across membranes. Together with TatC, TatB is part of a receptor directly interacting with Tat signal peptides. TatB may form an oligomeric binding site that transiently accommodates folded Tat precursor proteins before their translocation. The polypeptide is Sec-independent protein translocase protein TatB (Mycobacterium sp. (strain JLS)).